A 331-amino-acid chain; its full sequence is Porphobilinogen deaminase (331 aa).

An S-(dipyrrolylmethanemethyl)cysteine modification is found at Cys-248. The disordered stretch occupies residues 307 to 331 (QLLQAPKQTGEPHDPDRHDKGTGRP). Residues 316–331 (GEPHDPDRHDKGTGRP) are compositionally biased toward basic and acidic residues.

It belongs to the HMBS family. In terms of assembly, monomer. The cofactor is dipyrromethane.

The catalysed reaction is 4 porphobilinogen + H2O = hydroxymethylbilane + 4 NH4(+). The protein operates within porphyrin-containing compound metabolism; protoporphyrin-IX biosynthesis; coproporphyrinogen-III from 5-aminolevulinate: step 2/4. Tetrapolymerization of the monopyrrole PBG into the hydroxymethylbilane pre-uroporphyrinogen in several discrete steps. The polypeptide is Porphobilinogen deaminase (Acidothermus cellulolyticus (strain ATCC 43068 / DSM 8971 / 11B)).